Here is a 203-residue protein sequence, read N- to C-terminus: N-(5'-phosphoribosyl)anthranilate isomerase (203 aa).

Belongs to the TrpF family.

It catalyses the reaction N-(5-phospho-beta-D-ribosyl)anthranilate = 1-(2-carboxyphenylamino)-1-deoxy-D-ribulose 5-phosphate. It participates in amino-acid biosynthesis; L-tryptophan biosynthesis; L-tryptophan from chorismate: step 3/5. The chain is N-(5'-phosphoribosyl)anthranilate isomerase from Thermoanaerobacter sp. (strain X514).